The primary structure comprises 684 residues: Glycine--tRNA ligase beta subunit (684 aa).

The protein belongs to the class-II aminoacyl-tRNA synthetase family. Tetramer of two alpha and two beta subunits.

The protein localises to the cytoplasm. It catalyses the reaction tRNA(Gly) + glycine + ATP = glycyl-tRNA(Gly) + AMP + diphosphate. The polypeptide is Glycine--tRNA ligase beta subunit (Pseudomonas fluorescens (strain SBW25)).